Consider the following 145-residue polypeptide: Superoxide dismutase [Mn/Fe] (145 aa).

The Fe(3+) site is built by His10 and His64. The Mn(2+) site is built by His10 and His64. The interval 126–145 (TSTANQDTPISEGKKPILGL) is disordered.

It belongs to the iron/manganese superoxide dismutase family. It depends on Mn(2+) as a cofactor. The cofactor is Fe(3+).

It catalyses the reaction 2 superoxide + 2 H(+) = H2O2 + O2. Destroys superoxide anion radicals which are normally produced within the cells and which are toxic to biological systems. Catalyzes the dismutation of superoxide anion radicals into O2 and H2O2 by successive reduction and oxidation of the transition metal ion at the active site. This is Superoxide dismutase [Mn/Fe] (sodA) from Streptococcus oralis.